A 326-amino-acid chain; its full sequence is N-acetyl-gamma-glutamyl-phosphate reductase (326 aa).

The active site involves cysteine 155.

This sequence belongs to the NAGSA dehydrogenase family. Type 1 subfamily.

It is found in the cytoplasm. It catalyses the reaction N-acetyl-L-glutamate 5-semialdehyde + phosphate + NADP(+) = N-acetyl-L-glutamyl 5-phosphate + NADPH + H(+). Its pathway is amino-acid biosynthesis; L-arginine biosynthesis; N(2)-acetyl-L-ornithine from L-glutamate: step 3/4. In terms of biological role, catalyzes the NADPH-dependent reduction of N-acetyl-5-glutamyl phosphate to yield N-acetyl-L-glutamate 5-semialdehyde. The protein is N-acetyl-gamma-glutamyl-phosphate reductase of Shewanella frigidimarina (strain NCIMB 400).